Consider the following 427-residue polypeptide: Enolase (427 aa).

Position 163 (glutamine 163) interacts with (2R)-2-phosphoglycerate. Glutamate 205 serves as the catalytic Proton donor. The Mg(2+) site is built by aspartate 242, glutamate 285, and aspartate 312. Lysine 337, arginine 366, serine 367, and lysine 388 together coordinate (2R)-2-phosphoglycerate. The active-site Proton acceptor is lysine 337.

The protein belongs to the enolase family. It depends on Mg(2+) as a cofactor.

The protein localises to the cytoplasm. It is found in the secreted. It localises to the cell surface. The catalysed reaction is (2R)-2-phosphoglycerate = phosphoenolpyruvate + H2O. Its pathway is carbohydrate degradation; glycolysis; pyruvate from D-glyceraldehyde 3-phosphate: step 4/5. In terms of biological role, catalyzes the reversible conversion of 2-phosphoglycerate (2-PG) into phosphoenolpyruvate (PEP). It is essential for the degradation of carbohydrates via glycolysis. The sequence is that of Enolase from Burkholderia lata (strain ATCC 17760 / DSM 23089 / LMG 22485 / NCIMB 9086 / R18194 / 383).